A 445-amino-acid polypeptide reads, in one-letter code: MEKIWLEAQSNIKKVLTPQTYNTWIKPIHFHNVSDTNLTLEVPSKFIKEWVTEKYLSIIIEAISSLTNIKYQVDFKITEKSQVEKKKVDLQATEKIENDSTRNVDFNTNLNPKYTFDSFVCGASNQFAHAASQAVANNPACNYNPLFIYGGVGLGKTHLLIAIGNQIRENNKKAKICYYSSEKFMNEMINSLRYKKMDEFRNKFRKMDILLIDDIQFMAGKEATQEEFFHTFNALYESHKQIVVTSDKFPKDIPGLEERLRSRFEWGLIADIQPPDIETKIAILKKKSDLNSITLPNDVALFLASSATSNVRELEGMLIRLGAYASLTGSEISLNMARDILKDIIVEKTKDITVEMIQKHVADHFKIKVSELKSDKRLKTFVIPRQIAIYISRELTKASYPEIGERFGGKDHSTIIHSVKKIEKQMENDLEIKNTVEKMKKELMS.

The domain I, interacts with DnaA modulators stretch occupies residues 1-69; it reads MEKIWLEAQS…IEAISSLTNI (69 aa). The interval 69–108 is domain II; that stretch reads IKYQVDFKITEKSQVEKKKVDLQATEKIENDSTRNVDFNT. The interval 109–325 is domain III, AAA+ region; it reads NLNPKYTFDS…GMLIRLGAYA (217 aa). The ATP site is built by glycine 153, glycine 155, lysine 156, and threonine 157. Residues 326-445 are domain IV, binds dsDNA; the sequence is SLTGSEISLN…VEKMKKELMS (120 aa).

This sequence belongs to the DnaA family. In terms of assembly, oligomerizes as a right-handed, spiral filament on DNA at oriC.

It is found in the cytoplasm. Functionally, plays an essential role in the initiation and regulation of chromosomal replication. ATP-DnaA binds to the origin of replication (oriC) to initiate formation of the DNA replication initiation complex once per cell cycle. Binds the DnaA box (a 9 base pair repeat at the origin) and separates the double-stranded (ds)DNA. Forms a right-handed helical filament on oriC DNA; dsDNA binds to the exterior of the filament while single-stranded (ss)DNA is stabiized in the filament's interior. The ATP-DnaA-oriC complex binds and stabilizes one strand of the AT-rich DNA unwinding element (DUE), permitting loading of DNA polymerase. After initiation quickly degrades to an ADP-DnaA complex that is not apt for DNA replication. Binds acidic phospholipids. This chain is Chromosomal replication initiator protein DnaA, found in Geotalea daltonii (strain DSM 22248 / JCM 15807 / FRC-32) (Geobacter daltonii).